We begin with the raw amino-acid sequence, 181 residues long: Protein Syd (181 aa).

The protein belongs to the Syd family.

The protein resides in the cell inner membrane. Functionally, interacts with the SecY protein in vivo. May bind preferentially to an uncomplexed state of SecY, thus functioning either as a chelating agent for excess SecY in the cell or as a regulatory factor that negatively controls the translocase function. The polypeptide is Protein Syd (Citrobacter koseri (strain ATCC BAA-895 / CDC 4225-83 / SGSC4696)).